The following is a 277-amino-acid chain: Small ribosomal subunit protein uS2 (277 aa).

The tract at residues Ala-255–Gly-277 is disordered. Residues Ala-257–Gly-277 are compositionally biased toward low complexity.

It belongs to the universal ribosomal protein uS2 family.

The chain is Small ribosomal subunit protein uS2 from Mycobacteroides abscessus (strain ATCC 19977 / DSM 44196 / CCUG 20993 / CIP 104536 / JCM 13569 / NCTC 13031 / TMC 1543 / L948) (Mycobacterium abscessus).